The primary structure comprises 466 residues: Cysteine--tRNA ligase (466 aa).

Cysteine 28 provides a ligand contact to Zn(2+). Residues 30–40 (PTVYNYIHIGN) carry the 'HIGH' region motif. Zn(2+)-binding residues include cysteine 208, histidine 233, and glutamate 237. The 'KMSKS' region signature appears at 265–269 (KMSKS). ATP is bound at residue lysine 268.

It belongs to the class-I aminoacyl-tRNA synthetase family. As to quaternary structure, monomer. Requires Zn(2+) as cofactor.

The protein resides in the cytoplasm. The enzyme catalyses tRNA(Cys) + L-cysteine + ATP = L-cysteinyl-tRNA(Cys) + AMP + diphosphate. This Staphylococcus carnosus (strain TM300) protein is Cysteine--tRNA ligase.